We begin with the raw amino-acid sequence, 356 residues long: DNA integrity scanning protein DisA (356 aa).

The region spanning 11–149 (VHTMRDTLQR…EGKSHILEEP (139 aa)) is the DAC domain. Residues G78, L96, and 109-113 (TRHRS) contribute to the ATP site.

It belongs to the DisA family. In terms of assembly, homooctamer. Mg(2+) is required as a cofactor.

It carries out the reaction 2 ATP = 3',3'-c-di-AMP + 2 diphosphate. Its function is as follows. Participates in a DNA-damage check-point. DisA forms globular foci that rapidly scan along the chromosomes searching for lesions. In terms of biological role, also has diadenylate cyclase activity, catalyzing the condensation of 2 ATP molecules into cyclic di-AMP (c-di-AMP). c-di-AMP likely acts as a signaling molecule that may couple DNA integrity with a cellular process. The protein is DNA integrity scanning protein DisA of Corynebacterium efficiens (strain DSM 44549 / YS-314 / AJ 12310 / JCM 11189 / NBRC 100395).